Reading from the N-terminus, the 242-residue chain is Sugar fermentation stimulation protein homolog (242 aa).

The protein belongs to the SfsA family.

This is Sugar fermentation stimulation protein homolog from Rippkaea orientalis (strain PCC 8801 / RF-1) (Cyanothece sp. (strain PCC 8801)).